The chain runs to 194 residues: Protein GrpE (194 aa).

This sequence belongs to the GrpE family. In terms of assembly, homodimer.

The protein resides in the cytoplasm. In terms of biological role, participates actively in the response to hyperosmotic and heat shock by preventing the aggregation of stress-denatured proteins, in association with DnaK and GrpE. It is the nucleotide exchange factor for DnaK and may function as a thermosensor. Unfolded proteins bind initially to DnaJ; upon interaction with the DnaJ-bound protein, DnaK hydrolyzes its bound ATP, resulting in the formation of a stable complex. GrpE releases ADP from DnaK; ATP binding to DnaK triggers the release of the substrate protein, thus completing the reaction cycle. Several rounds of ATP-dependent interactions between DnaJ, DnaK and GrpE are required for fully efficient folding. This is Protein GrpE from Aliivibrio salmonicida (strain LFI1238) (Vibrio salmonicida (strain LFI1238)).